The following is a 74-amino-acid chain: UPF0435 protein Bcer98_0391 (74 aa).

It belongs to the UPF0435 family.

The chain is UPF0435 protein Bcer98_0391 from Bacillus cytotoxicus (strain DSM 22905 / CIP 110041 / 391-98 / NVH 391-98).